A 193-amino-acid polypeptide reads, in one-letter code: Chromophore lyase CpcS/CpeS 4 (193 aa).

The protein belongs to the CpcS/CpeS biliprotein lyase family.

Covalently attaches a chromophore to Cys residue(s) of phycobiliproteins. The sequence is that of Chromophore lyase CpcS/CpeS 4 from Trichodesmium erythraeum (strain IMS101).